A 261-amino-acid polypeptide reads, in one-letter code: Cytochrome c oxidase subunit 3 (261 aa).

Over 1-15 (MTHQTHAYHMVNPSP) the chain is Mitochondrial matrix. A helical membrane pass occupies residues 16–34 (WPLTGALSALLMSSGLTMW). Residues 35–40 (FHFNSL) lie on the Mitochondrial intermembrane side of the membrane. A helical membrane pass occupies residues 41–66 (ILLTTGLVTNILTMYQWWRDVIREST). The Mitochondrial matrix portion of the chain corresponds to 67 to 72 (FQGHHT). A helical transmembrane segment spans residues 73 to 105 (PVVQKGLRYGMVLFIISEVLFFTGFFWAFYHSS). Residues 106–128 (LAPTPELGGCWPPTGINPLNPLE) are Mitochondrial intermembrane-facing. Residues 129–152 (VPLLNTSVLLASGVSITWAHHSLM) traverse the membrane as a helical segment. Over 153–155 (EGN) the chain is Mitochondrial matrix. Residues 156-183 (RKQMLQALFITIALGVYFTLLQASEYHE) traverse the membrane as a helical segment. Topologically, residues 184 to 190 (ASFTISD) are mitochondrial intermembrane. The helical transmembrane segment at 191 to 223 (GVYGSTFFVATGFHGLHVIIGSTFLIVCFLRQL) threads the bilayer. Residues 224-232 (KFHFTSDHH) are Mitochondrial matrix-facing. The helical transmembrane segment at 233–256 (FGFEAAAWYWHFVDVVWLFLYVSI) threads the bilayer. Residues 257 to 261 (YWWGS) lie on the Mitochondrial intermembrane side of the membrane.

This sequence belongs to the cytochrome c oxidase subunit 3 family. Component of the cytochrome c oxidase (complex IV, CIV), a multisubunit enzyme composed of 14 subunits. The complex is composed of a catalytic core of 3 subunits MT-CO1, MT-CO2 and MT-CO3, encoded in the mitochondrial DNA, and 11 supernumerary subunits COX4I, COX5A, COX5B, COX6A, COX6B, COX6C, COX7A, COX7B, COX7C, COX8 and NDUFA4, which are encoded in the nuclear genome. The complex exists as a monomer or a dimer and forms supercomplexes (SCs) in the inner mitochondrial membrane with NADH-ubiquinone oxidoreductase (complex I, CI) and ubiquinol-cytochrome c oxidoreductase (cytochrome b-c1 complex, complex III, CIII), resulting in different assemblies (supercomplex SCI(1)III(2)IV(1) and megacomplex MCI(2)III(2)IV(2)).

The protein localises to the mitochondrion inner membrane. It catalyses the reaction 4 Fe(II)-[cytochrome c] + O2 + 8 H(+)(in) = 4 Fe(III)-[cytochrome c] + 2 H2O + 4 H(+)(out). In terms of biological role, component of the cytochrome c oxidase, the last enzyme in the mitochondrial electron transport chain which drives oxidative phosphorylation. The respiratory chain contains 3 multisubunit complexes succinate dehydrogenase (complex II, CII), ubiquinol-cytochrome c oxidoreductase (cytochrome b-c1 complex, complex III, CIII) and cytochrome c oxidase (complex IV, CIV), that cooperate to transfer electrons derived from NADH and succinate to molecular oxygen, creating an electrochemical gradient over the inner membrane that drives transmembrane transport and the ATP synthase. Cytochrome c oxidase is the component of the respiratory chain that catalyzes the reduction of oxygen to water. Electrons originating from reduced cytochrome c in the intermembrane space (IMS) are transferred via the dinuclear copper A center (CU(A)) of subunit 2 and heme A of subunit 1 to the active site in subunit 1, a binuclear center (BNC) formed by heme A3 and copper B (CU(B)). The BNC reduces molecular oxygen to 2 water molecules using 4 electrons from cytochrome c in the IMS and 4 protons from the mitochondrial matrix. The sequence is that of Cytochrome c oxidase subunit 3 (MT-CO3) from Hippopotamus amphibius (Hippopotamus).